A 620-amino-acid chain; its full sequence is Translocator protein BipB (620 aa).

Residues 58 to 95 (QCDAQPAAHDARLDDRPALRAPQERDAPPLGASDTGSR) are disordered. Basic and acidic residues predominate over residues 66-84 (HDARLDDRPALRAPQERDA). A coiled-coil region spans residues 309-339 (EMQAKREAELQKKSDEYQAQVKKAEEMQKTM). 3 helical membrane-spanning segments follow: residues 355–375 (FAAA…GLAL), 401–421 (AILK…LVAC), and 430–450 (LAGA…AAFV).

Belongs to the SctE/SipB/YopB family.

The protein resides in the secreted. It is found in the host membrane. Functionally, plays a role in the bacterium-induced formation of multinucleated giant cell (MNGC), which is formed after host cell fusion, as well as in the intercellular spreading of bacteria and in the induction of apoptosis in macrophages. May act in concert with other effector proteins to induce fusion of host cell membranes. The sequence is that of Translocator protein BipB (bipB) from Burkholderia mallei (strain NCTC 10247).